The following is a 160-amino-acid chain: Large ribosomal subunit protein eL21B (160 aa).

A Glycyl lysine isopeptide (Lys-Gly) (interchain with G-Cter in ubiquitin) cross-link involves residue Lys32.

This sequence belongs to the eukaryotic ribosomal protein eL21 family. In terms of assembly, component of the large ribosomal subunit (LSU). Mature yeast ribosomes consist of a small (40S) and a large (60S) subunit. The 40S small subunit contains 1 molecule of ribosomal RNA (18S rRNA) and 33 different proteins (encoded by 57 genes). The large 60S subunit contains 3 rRNA molecules (25S, 5.8S and 5S rRNA) and 46 different proteins (encoded by 81 genes).

The protein resides in the cytoplasm. Its function is as follows. Component of the ribosome, a large ribonucleoprotein complex responsible for the synthesis of proteins in the cell. The small ribosomal subunit (SSU) binds messenger RNAs (mRNAs) and translates the encoded message by selecting cognate aminoacyl-transfer RNA (tRNA) molecules. The large subunit (LSU) contains the ribosomal catalytic site termed the peptidyl transferase center (PTC), which catalyzes the formation of peptide bonds, thereby polymerizing the amino acids delivered by tRNAs into a polypeptide chain. The nascent polypeptides leave the ribosome through a tunnel in the LSU and interact with protein factors that function in enzymatic processing, targeting, and the membrane insertion of nascent chains at the exit of the ribosomal tunnel. In Saccharomyces cerevisiae (strain ATCC 204508 / S288c) (Baker's yeast), this protein is Large ribosomal subunit protein eL21B.